A 470-amino-acid polypeptide reads, in one-letter code: L-seryl-tRNA(Sec) selenium transferase (470 aa).

K292 is subject to N6-(pyridoxal phosphate)lysine.

It belongs to the SelA family. It depends on pyridoxal 5'-phosphate as a cofactor.

It localises to the cytoplasm. It carries out the reaction L-seryl-tRNA(Sec) + selenophosphate + H(+) = L-selenocysteinyl-tRNA(Sec) + phosphate. Its pathway is aminoacyl-tRNA biosynthesis; selenocysteinyl-tRNA(Sec) biosynthesis; selenocysteinyl-tRNA(Sec) from L-seryl-tRNA(Sec) (bacterial route): step 1/1. Functionally, converts seryl-tRNA(Sec) to selenocysteinyl-tRNA(Sec) required for selenoprotein biosynthesis. This is L-seryl-tRNA(Sec) selenium transferase from Moorella thermoacetica (strain ATCC 39073 / JCM 9320).